The primary structure comprises 725 residues: Polyribonucleotide nucleotidyltransferase (725 aa).

Positions 487 and 493 each coordinate Mg(2+). Residues 554-613 (PRIETMQIPTDKIREVIGTGGKVIREIVEKTGAKIDIQDTGVIKIASSDAKAIKAAYNWI) enclose the KH domain. One can recognise an S1 motif domain in the interval 623 to 691 (GMIYDGTVVK…ERGKIRLSMK (69 aa)). Positions 697-725 (TGEDITEKLKAEREADRNRERQARQSAGE) are disordered. A compositionally biased stretch (basic and acidic residues) spans 701–719 (ITEKLKAEREADRNRERQA).

It belongs to the polyribonucleotide nucleotidyltransferase family. Requires Mg(2+) as cofactor.

Its subcellular location is the cytoplasm. It carries out the reaction RNA(n+1) + phosphate = RNA(n) + a ribonucleoside 5'-diphosphate. Involved in mRNA degradation. Catalyzes the phosphorolysis of single-stranded polyribonucleotides processively in the 3'- to 5'-direction. The protein is Polyribonucleotide nucleotidyltransferase of Methylobacterium nodulans (strain LMG 21967 / CNCM I-2342 / ORS 2060).